Here is a 742-residue protein sequence, read N- to C-terminus: Condensin complex subunit 2 (742 aa).

4 disordered regions span residues 1–62 (MKRA…FNSS), 151–172 (QQTE…KKER), 452–473 (FNSS…STER), and 564–604 (IQPH…PSSS). Positions 21–39 (ALEKKRAKENSRKQRELRR) are enriched in basic and acidic residues. Over residues 53–62 (LNNSSPFNSS) the composition is skewed to polar residues. Acidic residues predominate over residues 154–165 (EEGEDAENDDED). Polar residues-rich tracts occupy residues 452 to 470 (FNSS…SLSS) and 592 to 604 (PKQT…PSSS).

Belongs to the CND2 (condensin subunit 2) family. As to quaternary structure, component of the condensin complex, which contains the cut14/smc2 and cut3/smc2 heterodimer, and three non SMC subunits that probably regulate the complex: cnd1, cnd2 and cnd3.

It is found in the nucleus. The protein localises to the cytoplasm. The protein resides in the chromosome. Its function is as follows. Regulatory subunit of the condensin complex, a complex required for conversion of interphase chromatin into mitotic-like condense chromosomes. The condensin complex probably introduces positive supercoils into relaxed DNA in the presence of type I topoisomerases and converts nicked DNA into positive knotted forms in the presence of type II topoisomerases. The condensin complex probably also plays a role during interphase in processes such as DNA repair. In Schizosaccharomyces pombe (strain 972 / ATCC 24843) (Fission yeast), this protein is Condensin complex subunit 2 (cnd2).